Here is a 1188-residue protein sequence, read N- to C-terminus: Meiotically up-regulated gene 190 protein (1188 aa).

A compositionally biased stretch (polar residues) spans 1-11 (MSTHSGDSTKQ). Disordered regions lie at residues 1-61 (MSTH…DPIT) and 83-125 (FTVP…EADN). The span at 41-61 (EKKEEQQREQTENEKLFDPIT) shows a compositional bias: basic and acidic residues. The span at 84–112 (TVPNQSIQGSSLPSEKPYLSSNQPTNVYK) shows a compositional bias: polar residues. A helical membrane pass occupies residues 173–193 (LVISWFFTHSIIISAVLPLAI). Residues 228 to 453 (IPESAEWMNH…SPKSMTIDLS (226 aa)) enclose the SMP-LTD domain. Residues 298 to 318 (ASESFSEKQASEAEHKDEPEQ) are disordered. The span at 302–318 (FSEKQASEAEHKDEPEQ) shows a compositional bias: basic and acidic residues. C2 domains follow at residues 451 to 576 (DLSK…ERCD) and 636 to 781 (KEEE…TKWY). 6 residues coordinate Ca(2+): D485, D491, D544, D546, S549, and D552. 2 disordered regions span residues 615 to 639 (TIPRSMRDDPAFQNPHGSLDNKEEE) and 1002 to 1066 (QRAS…GTMN). The residue at position 1005 (S1005) is a Phosphoserine. Residues 1022 to 1032 (DDSVDTEDEET) are compositionally biased toward acidic residues.

Ca(2+) is required as a cofactor.

The protein localises to the cytoplasm. Its subcellular location is the endoplasmic reticulum membrane. It is found in the nucleus membrane. It localises to the cytoskeleton. The protein resides in the microtubule organizing center. The protein localises to the spindle pole body. Its function is as follows. Has a role in meiosis. This Schizosaccharomyces pombe (strain 972 / ATCC 24843) (Fission yeast) protein is Meiotically up-regulated gene 190 protein (mug190).